A 1856-amino-acid chain; its full sequence is Golgi-specific brefeldin A-resistance guanine nucleotide exchange factor 1 (1856 aa).

The tract at residues 1-211 (MVDKNIYIIQ…EPKSYVGTNM (211 aa)) is DCB (dimerization and cyclophiln-binding); DCB:DCB domain and DCB:HUS domain interaction. The tract at residues 1-378 (MVDKNIYIIQ…SVHDMDYVNP (378 aa)) is interaction with RAB1B. 2 disordered regions span residues 215 to 256 (KMRA…NGAT) and 291 to 370 (DSGL…SASV). Residues 227 to 241 (WKKQKRSPRPPRHMT) show a composition bias toward basic residues. Polar residues predominate over residues 316–328 (RESTTTESGSNEI). Residues S349 and S352 each carry the phosphoserine modification. A Phosphothreonine modification is found at T505. The segment at 528 to 548 (RIPSFVTELYINYDCDYYCAN) is HUS (homology upstream of Sec7); DCB:HUS domain interaction. The disordered stretch occupies residues 601 to 626 (QEKKETSRPSYEAVDSTQEANSTERA). The segment covering 615-625 (DSTQEANSTER) has biased composition (polar residues). The SEC7 domain maps to 690–880 (ELIEIKNKKK…EDMYHAIKNE (191 aa)). The tract at residues 884–1370 (MPEEQTGLVR…LSRPSPSPLV (487 aa)) is phosphatidylinositol-phosphate binding; required for translocation to the leading edge and for ARF1 activation upon GPCR signaling. Over residues 1284 to 1294 (TARADAPDAGA) the composition is skewed to low complexity. Positions 1284–1333 (TARADAPDAGAQSDSELPSYHQNDVSLDRGYTSDSEVYTDHGRPGKIHRS) are disordered. The segment covering 1295–1308 (QSDSELPSYHQNDV) has biased composition (polar residues). Phosphoserine is present on S1296. Position 1314 is a phosphotyrosine (Y1314). Phosphoserine is present on residues S1316, S1318, and S1333. T1335 bears the Phosphothreonine; by AMPK mark. Disordered stretches follow at residues 1430 to 1484 (CKSQ…EGVP), 1739 to 1806 (THLT…PPLI), and 1837 to 1856 (PVPL…SEVN). A compositionally biased stretch (basic and acidic residues) spans 1432 to 1446 (SQDKRGKSHKYDSKG). S1475 and S1781 each carry phosphoserine. Residues 1775 to 1793 (SSSSPGSPVASSPSRLSPS) are compositionally biased toward low complexity.

As to quaternary structure, can form homodimers and probably homotetramers. Interacts with COPG1; the interaction is independent on ARF1 activation. Interacts with ARF1, ARF3, ARF4 and ARF5. Interacts with RAB1B (GTP-bound form); required for GBF1 membrane association. Interacts with GGA1, GGA2 and GGA3. Interacts with USO1. Interacts (via SEC7 domain) with PNPLA2 (via C-terminus); the interaction is direct. Can form homodimers and probably homotetramers. Interacts with COPG1; the interaction is independent on ARF1 activation. Interacts with ARF1, ARF3, ARF4 and ARF5. Interacts with RAB1B (GTP-bound form); required for GBF1 membrane association. Interacts with GGA1, GGA2 and GGA3. Interacts with USO1. Interacts (via SEC7 domain) with PNPLA2 (via C-terminus); the interaction is direct. Interacts with ARMH3.

The protein localises to the golgi apparatus. It localises to the cis-Golgi network. It is found in the endoplasmic reticulum-Golgi intermediate compartment. Its subcellular location is the trans-Golgi network. The protein resides in the cytoplasm. The protein localises to the lipid droplet. It localises to the membrane. With respect to regulation, inhibited by brefeldin A (BFA). Inhibited by golgicide A (GCA). Its function is as follows. Guanine-nucleotide exchange factor (GEF) for members of the Arf family of small GTPases involved in trafficking in the early secretory pathway; its GEF activity initiates the coating of nascent vesicles via the localized generation of activated ARFs through replacement of GDP with GTP. Recruitment to cis-Golgi membranes requires membrane association of Arf-GDP and can be regulated by ARF1, ARF3, ARF4 and ARF5. Involved in the recruitment of the COPI coat complex to cellular membranes such as the endoplasmic reticulum exit sites (ERES), and the endoplasmic reticulum-Golgi intermediate (ERGIC) and cis-Golgi compartments implicating ARF1 activation. Involved in COPI vesicle-dependent retrograde transport from the ERGIC and cis-Golgi compartments to the endoplasmic reticulum (ER). Involved in the trans-Golgi network recruitment of GGA1, GGA2, GGA3, BIG1, BIG2, and the AP-1 adaptor protein complex related to chlathrin-dependent transport; the function requires its GEF activity (probably at least in part on ARF4 and ARF5). Has GEF activity towards ARF1. Has in vitro GEF activity towards ARF5. Involved in the processing of PSAP. Required for the assembly of the Golgi apparatus. The AMPK-phosphorylated form is involved in Golgi disassembly during mitotis and under stress conditions. May be involved in the COPI vesicle-dependent recruitment of PNPLA2 to lipid droplets. In neutrophils, involved in G protein-coupled receptor (GPCR)-mediated chemotaxis und superoxide production. Proposed to be recruited by phosphatidylinositol-phosphates generated upon GPCR stimulation to the leading edge where it recruits and activates ARF1, and is involved in recruitment of GIT2 and the NADPH oxidase complex. Plays a role in maintaining mitochondrial morphology. This Cricetulus griseus (Chinese hamster) protein is Golgi-specific brefeldin A-resistance guanine nucleotide exchange factor 1 (GBF1).